Consider the following 103-residue polypeptide: N(4)-acetylcytidine amidohydrolase (103 aa).

An ASCH domain is found at Ile6–Phe100. The active-site Proton acceptor is Lys21. The active-site Nucleophile is the Thr24. The active-site Proton donor is the Glu74.

The protein belongs to the N(4)-acetylcytidine amidohydrolase family.

It catalyses the reaction N(4)-acetylcytidine + H2O = cytidine + acetate + H(+). The enzyme catalyses N(4)-acetyl-2'-deoxycytidine + H2O = 2'-deoxycytidine + acetate + H(+). The catalysed reaction is N(4)-acetylcytosine + H2O = cytosine + acetate + H(+). Functionally, catalyzes the hydrolysis of N(4)-acetylcytidine (ac4C). The polypeptide is N(4)-acetylcytidine amidohydrolase (Klebsiella pneumoniae (strain 342)).